The chain runs to 844 residues: MQDISNHTPMIQQYLKIKSQYQDILLFYRMGDFYELFFDDAKKAAELLDITLTARGKSNGESIPMAGVPYHAAEAYIAKIVKKGLSIAICEQTGDPNTSKGPVERQVTRIITPATVSEEAFLDSNQDSILVSIFEKNNKYYLAYTSYTQGKIYLVKTLTSLNELKNTVLKLSPQEIITNSRELAQQNPFKKPIKALEEWYYSNFEAKKYINDSLDTNIANNILNLYKNDQLTTIGSILSYLTNILKDTPRHITDISYEQEQDTLNIDINSRINLELDNSSKSSLLSIIGKCKTSLGSRLLKRYFSNPTRNLNILATRHNIINSLVENQHFLKIQDVLSYISDIERIISRVALGTVKPKDLVALRDSLEQLPILKKLLSEKNTPEITNINNRIHQLDELVTLLDKAIIENPPATIRDGGVIKEGFDKELDELKSIKDNSYDFLIKFEELQKQKTGISTLKVGYNRVHGYYIELSKQHADKIPTEYIRRQTLKASERYITEELKNFEDKILSSKEKALAREKLIYETLLKKVIEYYKQIQETAASIAEIDVLANFAERAIKLKLSQPKFNNLAKLELKEVRHLAIEHNIDEPFIPNDTLLSKDTNTLQIITGPNMGGKSTYMRQVAQLIFLAYIGSFVPASYADICDIDTIYTRIGASDDISSGRSTFMVEMTETAYILNNASAKSLVIMDEIGRGTSTFDGLALAKACAEKFAQIGAFTLFATHYFELTELAKQYPNVCNIHFEAKEYKDNIYFMHKAVTGAAKKSYGIQVAKLAGISQDVLESAKQNLYNLEKKQHLAESTQIQAQFELEPTTQNPLQQKLDAIDINTITPLEALNILFELKKR.

Residue 610–617 (GPNMGGKS) coordinates ATP.

This sequence belongs to the DNA mismatch repair MutS family.

Its function is as follows. This protein is involved in the repair of mismatches in DNA. It is possible that it carries out the mismatch recognition step. This protein has a weak ATPase activity. This is DNA mismatch repair protein MutS from Francisella tularensis subsp. novicida (strain U112).